The chain runs to 345 residues: Ananain (345 aa).

The first 24 residues, 1-24 (MTSKVQLVFLFLFLCVMWASPSAA), serve as a signal peptide directing secretion. A propeptide spans 25–122 (SCDEPSDPMM…VSFDDVDISS (98 aa)) (activation peptide). 3 disulfides stabilise this stretch: C144/C184, C178/C217, and C273/C325. Residue C147 is part of the active site. C147 lines the E64 pocket. Catalysis depends on residues H279 and N300.

Stem (at protein level).

The enzyme catalyses Hydrolysis of proteins with broad specificity for peptide bonds. Best reported small molecule substrate Bz-Phe-Val-Arg-|-NHMec, but broader specificity than fruit bromelain.. Strongly inhibited by chicken egg-white cystatin. Inhibited by iodoacetamide and the active-site-directed inhibitor E64 (L-trans-epoxysuccinyl-leucylamide-(4-guanido)-butane). Functionally, cysteine protease. Displays a high level of diversity in substrate specificity at the P1-P1' cleavage site. A hydrophilic P1 residue is preferred, with Gln or Arg strongly preferred. Favors an Ile/Leu residue at the P2 position of substrates, with an overall higher preference for Leu. The optimal tripeptide for cleavage is Pro-Leu-Gln, with cleavage occurring after the Gln residue. Another optimal tripeptide is Val-Leu-Arg, which may imply that a hydrophobic residue at the P3 position of substrates is preferred. In Ananas comosus (Pineapple), this protein is Ananain.